Consider the following 196-residue polypeptide: 3-dehydroquinate dehydratase (196 aa).

3-dehydroquinate is bound by residues 23-25 (ELR) and Arg-45. Catalysis depends on His-98, which acts as the Proton donor/acceptor. Lys-122 acts as the Schiff-base intermediate with substrate in catalysis. The 3-dehydroquinate site is built by Arg-159 and Gln-182.

The protein belongs to the type-I 3-dehydroquinase family. Homodimer.

The catalysed reaction is 3-dehydroquinate = 3-dehydroshikimate + H2O. It participates in metabolic intermediate biosynthesis; chorismate biosynthesis; chorismate from D-erythrose 4-phosphate and phosphoenolpyruvate: step 3/7. Functionally, involved in the third step of the chorismate pathway, which leads to the biosynthesis of aromatic amino acids. Catalyzes the cis-dehydration of 3-dehydroquinate (DHQ) and introduces the first double bond of the aromatic ring to yield 3-dehydroshikimate. In Archaeoglobus fulgidus (strain ATCC 49558 / DSM 4304 / JCM 9628 / NBRC 100126 / VC-16), this protein is 3-dehydroquinate dehydratase.